The chain runs to 1067 residues: Receptor-type guanylate cyclase gcy-10 (1067 aa).

The signal sequence occupies residues 1–20; it reads MLKSLLIIVIVFLHRELCDG. At 21 to 438 the chain is on the extracellular side; the sequence is IQLILFDNWP…CVAKSSCVNY (418 aa). N-linked (GlcNAc...) asparagine glycosylation is present at N411. A helical transmembrane segment spans residues 439-459; that stretch reads IPHIIAAVVIVTIIVIAIVII. Residues 460–1067 are Cytoplasmic-facing; sequence VKQRRHKLNI…RGSIVPLQKA (608 aa). Positions 509-791 constitute a Protein kinase domain; the sequence is ALTSRRRVFG…ESISTVYPLS (283 aa). Residues 515 to 523 and K534 each bind ATP; that span reads RVFGSYALV. Positions 859-989 constitute a Guanylate cyclase domain; that stretch reads TVMFVQICDF…DTVNFASRMQ (131 aa).

The protein belongs to the adenylyl cyclase class-4/guanylyl cyclase family. As to expression, expressed predominantly in AWC but also in AWB, ASI, ASJ and ASK sensory neurons and in I1 interneuron.

Its subcellular location is the cell membrane. It localises to the cell projection. It is found in the cilium. The enzyme catalyses GTP = 3',5'-cyclic GMP + diphosphate. Its function is as follows. Guanylate cyclase involved in the production of the second messenger cGMP. Regulates chemotaxis responses toward volatile odorants in AWC sensory neurons and their avoidance in AWB sensory neurons. May be involved in sensitivity to quinine by regulating egl-4 activity through the production of cGMP. Involved in phototransduction in ASJ neurons downstream of G protein coupled-photoreceptor lite-1. Required to maintain the expression of putative olfactory receptor str-2 in AWC neurons in adults. In AWB and AWC sensory neurons, mediates the recognition of food oders which subsequently allows for the detection of preferred food sources. Involved in AWB sensory neuron development and extension during postembryonic development, potentially via mediating localization of tub-1 and PI(4,5)P2 to membrane cilia. The polypeptide is Receptor-type guanylate cyclase gcy-10 (Caenorhabditis elegans).